The sequence spans 156 residues: ATP synthase subunit b (156 aa).

A helical membrane pass occupies residues 4-26; sequence GATFWGPMISFALFVWFTMKYVW.

Belongs to the ATPase B chain family. In terms of assembly, F-type ATPases have 2 components, F(1) - the catalytic core - and F(0) - the membrane proton channel. F(1) has five subunits: alpha(3), beta(3), gamma(1), delta(1), epsilon(1). F(0) has three main subunits: a(1), b(2) and c(10-14). The alpha and beta chains form an alternating ring which encloses part of the gamma chain. F(1) is attached to F(0) by a central stalk formed by the gamma and epsilon chains, while a peripheral stalk is formed by the delta and b chains.

The protein localises to the cell inner membrane. In terms of biological role, f(1)F(0) ATP synthase produces ATP from ADP in the presence of a proton or sodium gradient. F-type ATPases consist of two structural domains, F(1) containing the extramembraneous catalytic core and F(0) containing the membrane proton channel, linked together by a central stalk and a peripheral stalk. During catalysis, ATP synthesis in the catalytic domain of F(1) is coupled via a rotary mechanism of the central stalk subunits to proton translocation. Its function is as follows. Component of the F(0) channel, it forms part of the peripheral stalk, linking F(1) to F(0). The chain is ATP synthase subunit b from Alkalilimnicola ehrlichii (strain ATCC BAA-1101 / DSM 17681 / MLHE-1).